A 343-amino-acid polypeptide reads, in one-letter code: Malate dehydrogenase, peroxisomal (343 aa).

NAD(+) contacts are provided by residues 8 to 14 and D34; that span reads GASGGVG. 2 residues coordinate substrate: R80 and R86. Residues N93 and 116–118 each bind NAD(+); that span reads ISN. Positions 118 and 152 each coordinate substrate. The active-site Proton acceptor is the H187. M237 provides a ligand contact to NAD(+).

Belongs to the LDH/MDH superfamily. MDH type 1 family. As to quaternary structure, homodimer.

The protein resides in the peroxisome. The enzyme catalyses (S)-malate + NAD(+) = oxaloacetate + NADH + H(+). The chain is Malate dehydrogenase, peroxisomal (MDH3) from Saccharomyces cerevisiae (strain ATCC 204508 / S288c) (Baker's yeast).